A 241-amino-acid chain; its full sequence is Triosephosphate isomerase (241 aa).

Substrate is bound at residue Asn-8–Lys-10. Catalysis depends on His-93, which acts as the Electrophile. Glu-163 serves as the catalytic Proton acceptor. Substrate-binding positions include Gly-169, Ser-205, and Gly-226–Gly-227.

The protein belongs to the triosephosphate isomerase family. Homodimer.

It localises to the cytoplasm. The enzyme catalyses D-glyceraldehyde 3-phosphate = dihydroxyacetone phosphate. The protein operates within carbohydrate biosynthesis; gluconeogenesis. It participates in carbohydrate degradation; glycolysis; D-glyceraldehyde 3-phosphate from glycerone phosphate: step 1/1. In terms of biological role, involved in the gluconeogenesis. Catalyzes stereospecifically the conversion of dihydroxyacetone phosphate (DHAP) to D-glyceraldehyde-3-phosphate (G3P). The sequence is that of Triosephosphate isomerase from Bdellovibrio bacteriovorus (strain ATCC 15356 / DSM 50701 / NCIMB 9529 / HD100).